The following is a 701-amino-acid chain: Elongation factor G 1 (701 aa).

One can recognise a tr-type G domain in the interval Lys13 to Leu288. GTP is bound by residues Ala22 to Thr29, Asp86 to His90, and Asn140 to Asp143.

This sequence belongs to the TRAFAC class translation factor GTPase superfamily. Classic translation factor GTPase family. EF-G/EF-2 subfamily.

It is found in the cytoplasm. Functionally, catalyzes the GTP-dependent ribosomal translocation step during translation elongation. During this step, the ribosome changes from the pre-translocational (PRE) to the post-translocational (POST) state as the newly formed A-site-bound peptidyl-tRNA and P-site-bound deacylated tRNA move to the P and E sites, respectively. Catalyzes the coordinated movement of the two tRNA molecules, the mRNA and conformational changes in the ribosome. This chain is Elongation factor G 1, found in Bdellovibrio bacteriovorus (strain ATCC 15356 / DSM 50701 / NCIMB 9529 / HD100).